The sequence spans 286 residues: Protein NipSnap homolog 2 (286 aa).

A mitochondrion-targeting transit peptide spans 1 to 23; sequence MAARVLRARGAAWAGGLLQRAAP.

Belongs to the NipSnap family. In terms of assembly, interacts with CALCOCO2/NDP52, NBR1, SQSTM1/p62, TAX1BP1 and WDFY3/ALFY. Interacts with ATG8 family proteins (MAP1LC3A, MAP1LC3B, MAP1LC3C, GABARAP, GABARAPL1 and GABARAPL2). Interacts with VDAC1. In terms of tissue distribution, widely expressed. Most abundant in heart and skeletal muscle.

The protein localises to the mitochondrion matrix. Its function is as follows. Protein involved in mitophagy by facilitating recruitment of the autophagy machinery required for clearance of damaged mitochondria. Accumulates on the mitochondria surface in response to mitochondrial depolarization and acts as a 'eat me' signal by recruiting proteins involved in selective autophagy, such as autophagy receptors (CALCOCO2/NDP52, NBR1, SQSTM1/p62, TAX1BP1 and WDFY3/ALFY) and ATG8 family proteins (MAP1LC3A, MAP1LC3B, MAP1LC3C, GABARAP, GABARAPL1 and GABARAPL2). This Homo sapiens (Human) protein is Protein NipSnap homolog 2.